The following is a 668-amino-acid chain: Putative ankyrin repeat protein FPV244 (668 aa).

ANK repeat units follow at residues 40–69 (IPFT…KLIY), 144–173 (EYMK…DVNA), 177–206 (YCRT…DVNI), 210–239 (DDLS…NINK), 272–302 (YKNT…DVNA), 306–336 (KGET…DVNA), 340–370 (LYIT…NVNA), 374–403 (CDKT…DIEA), 407–437 (KIGT…NVNS), 441–471 (YLST…DVNA), 473–502 (NIRN…ELRD), and 571–602 (NMFY…EINT).

This chain is Putative ankyrin repeat protein FPV244, found in Vertebrata (FPV).